A 900-amino-acid chain; its full sequence is MKDYKSTLNMPTTGFEMRANLNVKEPKIQQFWVEHQIYEKLLTKNKDKKPFILHDGPPYANGNIHIGHALNKILKDFVVSYHNMNNYYSPYIPGWDTHGLPIEVALSKKIKLSNLSVNERREQCKKYALEQVNNQIQQFLRLGMISDFKQRYLTLDHNYEIDQLKLFTYMLKKGFIYQDFKPVFWSWSSQTALAESEIEYADRQSSAIYVKMKVVDHNDLFTDKPTSLVIWTTTPWTLPANLAIAIHPELVYSLIEYKNENYIIAKPLVETFVKKVGFEDYKWIKDFKANTLEKIKYISPISKKHAFVIMDEYVSANDGTGLVHNAPAFGLEDYYACKKYGIETVVMIDQFGKYNALVNDLELENMFYEDANQVILNRLMNEHLLIHHEVITHSVAHDWRTKKPVMYRATKQWFVSIEKILPNILQTLNNDVKSTSFRGIERMHEMIVNRKEWCISRQRVWGVPIPMIFDENHNAIMDHELVENIINVLNEKGVNAWFDLDVNAFLTPKYLSMKNKTFYKEKDIMDVWFDSGSSYNILGHYNLNYPADVYLEGYDQYRGWFNSSLITGTILNNRAPYKYLVAHGMVLDGEGYKMSKSKGNVVDPLDVCKIYGADVLRLWIANSDYQNDTRISEEILKQNAEIYRRIRNTLFKYSLSILNDFEPSVDFSFNVRQEEQFVLNEFNELHIKVIKAYENFDYQTVVKLFNKFILDLSSWYFENIKDDMYCLAINDPIRKQIQSAVYWILKNSLIDLTPIIPHTTEEAYSFLKDANKKESIRLEDFYDQSQFQFKKGIAHVKAFFSIKDQIFNELENARKNNILKKNNEAFVTIAKNLILDDYLINNPKLLAKWFGVAKIEFANNTNVANANFKKCLRCWNHFPDEEMYNDELSMNCYKVINKIK.

The short motif at 58–68 (PYANGNIHIGH) is the 'HIGH' region element. Glu-552 serves as a coordination point for L-isoleucyl-5'-AMP. Residues 593-597 (KMSKS) carry the 'KMSKS' region motif. Lys-596 provides a ligand contact to ATP.

The protein belongs to the class-I aminoacyl-tRNA synthetase family. IleS type 1 subfamily. Monomer.

The protein resides in the cytoplasm. It catalyses the reaction tRNA(Ile) + L-isoleucine + ATP = L-isoleucyl-tRNA(Ile) + AMP + diphosphate. Functionally, catalyzes the attachment of isoleucine to tRNA(Ile). As IleRS can inadvertently accommodate and process structurally similar amino acids such as valine, to avoid such errors it has two additional distinct tRNA(Ile)-dependent editing activities. One activity is designated as 'pretransfer' editing and involves the hydrolysis of activated Val-AMP. The other activity is designated 'posttransfer' editing and involves deacylation of mischarged Val-tRNA(Ile). The sequence is that of Isoleucine--tRNA ligase from Ureaplasma parvum serovar 3 (strain ATCC 700970).